Here is a 554-residue protein sequence, read N- to C-terminus: Solute carrier family 22 member 1 (554 aa).

The Cytoplasmic segment spans residues 1–21 (MPTVDDVLEQVGEFGWFQKRT). Residues 22–42 (FLFLCLISAILAPIYLGIVFL) traverse the membrane as a helical segment. The Extracellular portion of the chain corresponds to 43-149 (GFTPDHRCRS…LVCADAWKVD (107 aa)). A glycan (N-linked (GlcNAc...) asparagine) is linked at Asn-71. The chain crosses the membrane as a helical span at residues 150 to 170 (LFQSCVNLGFFLGSLGVGYIA). At 171–176 (DRFGRK) the chain is on the cytoplasmic side. Residues 177-197 (LCLLLTTLINAVSGVLTAVAP) traverse the membrane as a helical segment. The Extracellular portion of the chain corresponds to 198-206 (DYTSMLLFR). A helical transmembrane segment spans residues 207-229 (LLQGLVSKGSWMSGYTLITEFVG). The Cytoplasmic portion of the chain corresponds to 230–237 (SGYRRTVA). The chain crosses the membrane as a helical span at residues 238–258 (ILYQVAFSVGLVALSGVAYAI). Over 259–262 (PNWR) the chain is Extracellular. Residues 263-283 (WLQLTVSLPTFLCLFYYWCVP) traverse the membrane as a helical segment. Residues 283–287 (PESPR) carry the Proline-rich sequence motif. The Cytoplasmic segment spans residues 284–347 (ESPRWLLSQK…FRTPNLRKHT (64 aa)). Ser-333 carries the post-translational modification Phosphoserine. The chain crosses the membrane as a helical span at residues 348–368 (FILMFLWFTCSVLYQGLILHM). The Extracellular portion of the chain corresponds to 369–374 (GATGGN). The helical transmembrane segment at 375-395 (VYLDFFYSSLVEFPAAFVILV) threads the bilayer. At 396–402 (TIDRVGR) the chain is on the cytoplasmic side. A helical transmembrane segment spans residues 403–423 (IYPMAASNLAAGVASVILIFV). Over 424–431 (PQDLHWLT) the chain is Extracellular. A helical transmembrane segment spans residues 432–452 (IVLSCVGRMGATIVLQMICLV). The Cytoplasmic portion of the chain corresponds to 453–464 (NAELYPTFVRNL). The helical transmembrane segment at 465–485 (GVMVCSALCDVGGIITPFMVF) threads the bilayer. Topologically, residues 486-492 (RLMEVWQ) are extracellular. A helical transmembrane segment spans residues 493-513 (PLPLIVFGVLGLLAGGMTLLL). Residues 514-554 (PETKGVALPETIEDAENLRRKAKPKESKIYLQVQTSELKGP) lie on the Cytoplasmic side of the membrane.

It belongs to the major facilitator (TC 2.A.1) superfamily. Organic cation transporter (TC 2.A.1.19) family. In terms of processing, phosphorylated. In terms of tissue distribution, expressed in kidney, liver and intestine.

Its subcellular location is the basolateral cell membrane. The protein localises to the apical cell membrane. It localises to the lateral cell membrane. The protein resides in the basal cell membrane. The enzyme catalyses 1-methylnicotinamide(out) = 1-methylnicotinamide(in). It carries out the reaction dopamine(out) = dopamine(in). The catalysed reaction is serotonin(out) = serotonin(in). It catalyses the reaction (R)-adrenaline(out) = (R)-adrenaline(in). The enzyme catalyses (R)-noradrenaline(out) = (R)-noradrenaline(in). It carries out the reaction histamine(out) = histamine(in). The catalysed reaction is guanidine(out) = guanidine(in). It catalyses the reaction choline(out) = choline(in). The enzyme catalyses acetylcholine(in) = acetylcholine(out). It carries out the reaction thiamine(in) = thiamine(out). The catalysed reaction is spermidine(in) = spermidine(out). It catalyses the reaction agmatine(out) = agmatine(in). The enzyme catalyses putrescine(out) = putrescine(in). It carries out the reaction (R)-carnitine(in) = (R)-carnitine(out). The catalysed reaction is O-isobutanoyl-(R)-carnitine(in) = O-isobutanoyl-(R)-carnitine(out). It catalyses the reaction O-acetyl-(R)-carnitine(in) = O-acetyl-(R)-carnitine(out). The enzyme catalyses O-3-hydroxybutanoyl-(R)-carnitine(in) = O-3-hydroxybutanoyl-(R)-carnitine(out). It carries out the reaction O-propanoyl-(R)-carnitine(in) = O-propanoyl-(R)-carnitine(out). The catalysed reaction is O-butanoyl-(R)-carnitine(in) = O-butanoyl-(R)-carnitine(out). It catalyses the reaction O-2-methylbutanoyl-(R)-carnitine(in) = O-2-methylbutanoyl-(R)-carnitine(out). The enzyme catalyses O-3-methylbutanoyl-(R)-carnitine(in) = O-3-methylbutanoyl-(R)-carnitine(out). It carries out the reaction O-hexanoyl-(R)-carnitine(in) = O-hexanoyl-(R)-carnitine(out). The catalysed reaction is L-histidyl-L-proline diketopiperazine(in) = L-histidyl-L-proline diketopiperazine(out). It catalyses the reaction (R)-salsolinol(in) = (R)-salsolinol(out). The enzyme catalyses prostaglandin F2alpha(out) = prostaglandin F2alpha(in). It carries out the reaction prostaglandin E2(out) = prostaglandin E2(in). With respect to regulation, phosphorylation of the transporter leads to changes in its substrate affinity, resulting in a regulation of the transport activity. In contrast with rat ortholog, ASP uptake is inhibited by protein kinase A (PKA) and C (PKC) activation. ASP uptake is also endogenously activated by calmodulin, the calmodulin-dependent kinase II and LCK tyrosine kinase. Inhibited by cGMP, most likely through a cGMP-binding protein that interacts with OCT1. Its function is as follows. Electrogenic voltage-dependent transporter that mediates the transport of a variety of organic cations such as endogenous bioactive amines, cationic drugs and xenobiotics. Functions as a pH- and Na(+)-independent, bidirectional transporter. Cation cellular uptake or release is driven by the electrochemical potential (i.e. membrane potential and concentration gradient) and substrate selectivity. Hydrophobicity is a major requirement for recognition in polyvalent substrates and inhibitors. Primarily expressed in the basolateral membrane of hepatocytes and proximal tubules and involved in the uptake and disposition of cationic compounds from the blood by hepatic and renal clearance. Most likely functions as an uptake carrier in enterocytes contributing to the intestinal elimination of organic cations from the systemic circulation. Transports endogenous monoamines such as N-1-methylnicotinamide (NMN), guanidine, neurotransmitters dopamine, serotonin, noradrenaline, adrenaline and histamine, and quaternary ammonium compound such as choline. Also transports natural polyamines such as spermidine, agmatine and putrescine at low affinity, but relatively high turnover. Involved in the hepatic and intestinal uptake of the vitamin B1/thiamine, hence regulating hepatic lipid and energy metabolism. Contributes to the influx and efflux of fatty acid carriers carnitines and acylcarnitines across the basolateral membrane of hepatocytes, from the liver to the systemic circulation and inversely and may be involved in regulating the systemic availability of hepatic acylcarnitines. Also capable of transporting non-amine endogenous compounds such as prostaglandin E2 (PGE2) and prostaglandin F2-alpha (PGF2-alpha). May contribute to the transport of cationic compounds in testes across the blood-testis-barrier. Also mediates the uptake of xenobiotics tributylmethylammonium (TBuMA), quinidine, N-methyl-quinine (NMQ), N-methyl-quinidine (NMQD) N-(4,4-azo-n-pentyl)-quinuclidine (APQ), azidoprocainamide methoiodide (AMP), N-(4,4-azo-n-pentyl)-21-deoxyajmalinium (APDA) and 4-(4-(dimethylamino)styryl)-N-methylpyridinium (ASP). The sequence is that of Solute carrier family 22 member 1 (SLC22A1) from Oryctolagus cuniculus (Rabbit).